Reading from the N-terminus, the 220-residue chain is Kinetochore protein Spc25 (220 aa).

A coiled-coil region spans residues isoleucine 41 to leucine 119.

The protein belongs to the SPC25 family. Component of the Ndc80 complex, which is composed of Ndc80, Nuf2 and Spc25.

It localises to the nucleus. It is found in the chromosome. The protein resides in the centromere. The protein localises to the kinetochore. In terms of biological role, acts as a component of the essential kinetochore-associated Ndc80 complex, which is required for chromosome segregation and spindle checkpoint activity during meiosis and mitosis. Required for kinetochore integrity and the organization of stable microtubule binding sites in the outer plate of the kinetochore. Participates in SAC signaling that responds specifically to disruptions in spindle microtubule dynamics. The NDC80 complex synergistically enhances the affinity of the SKA1 complex for microtubules and may allow the NDC80 complex to track depolymerizing microtubules. This Drosophila erecta (Fruit fly) protein is Kinetochore protein Spc25.